Reading from the N-terminus, the 384-residue chain is Beta-ureidopropionase (384 aa).

A CN hydrolase domain is found at 72–344 (VHVGLVQNRI…DGLLVAKLDL (273 aa)). The Proton acceptor role is filled by E119. The active-site Proton donor is the K196. C233 serves as the catalytic Nucleophile. S378 bears the Phosphoserine mark.

It belongs to the carbon-nitrogen hydrolase superfamily. BUP family. As to quaternary structure, homodimer, homotetramer, homooctamer; can also form higher homooligomers.

The protein localises to the cytoplasm. The enzyme catalyses 3-(carbamoylamino)propanoate + H2O + 2 H(+) = beta-alanine + NH4(+) + CO2. It carries out the reaction 3-(carbamoylamino)-2-methylpropanoate + H2O + 2 H(+) = (R)-3-amino-2-methylpropanoate + NH4(+) + CO2. Its pathway is amino-acid biosynthesis; beta-alanine biosynthesis. In terms of biological role, catalyzes a late step in pyrimidine degradation. Converts N-carbamoyl-beta-alanine (3-ureidopropanoate) into beta-alanine, ammonia and carbon dioxide. Likewise, converts N-carbamoyl-beta-aminoisobutyrate (3-ureidoisobutyrate) into beta-aminoisobutyrate, ammonia and carbon dioxide. This Pongo abelii (Sumatran orangutan) protein is Beta-ureidopropionase (UPB1).